The primary structure comprises 399 residues: MVCLKTLSVFLAAFAAADARAVFKTQGHKNSEMIPDNYIVVMKDGVSQDDFKAHVSSVASIHSTNKAKRGTNTEGMKREFDIMNWRGYHGHFDRDTLEEILNDSKVDYVEQDQVVRISGLVTQRGAPSWGLGRVSHRQAGSRDYVFDDSAGRGVTIYGVDTGIDINHQDFRGRARWGTNTADRDNADRHGHGTHTASTFAGTAYGIAKNANIVAVKVLGSDGSGSTSGIIAGINYCVQDAQQRGILGKAAMNLSLGGGFSQANNDAVTRAQNAGIFVAVAAGNDNRDARNYSPASAPAVCTVASSTINDSKSSFSNWGPVVDIYAPGSDIIAARPGGGSTTMSGTSMASPHVAGMGAYMIGLGADPRSLCDRLKQLATPAIRNPGSSTTNRLLYNGSGQ.

Positions methionine 1–alanine 19 are cleaved as a signal peptide. Residues arginine 20–serine 118 constitute a propeptide that is removed on maturation. One can recognise an Inhibitor I9 domain in the interval tyrosine 38 to isoleucine 117. Residue asparagine 102 is glycosylated (N-linked (GlcNAc...) asparagine). A Peptidase S8 domain is found at serine 128–glutamine 399. Catalysis depends on charge relay system residues aspartate 160 and histidine 191. N-linked (GlcNAc...) asparagine glycans are attached at residues asparagine 252 and asparagine 308. Serine 346 serves as the catalytic Charge relay system. The N-linked (GlcNAc...) asparagine glycan is linked to asparagine 395.

It belongs to the peptidase S8 family.

It localises to the secreted. Functionally, secreted subtilisin-like serine protease with keratinolytic activity that contributes to pathogenicity. The protein is Subtilisin-like protease 4 (SUB4) of Trichophyton tonsurans (Scalp ringworm fungus).